A 172-amino-acid chain; its full sequence is Transcriptional repressor NrdR (172 aa).

The segment at 3 to 34 (CPFCGAPDTRVIDSRLAGEGDQVRRRRECLSC) is a zinc-finger region. In terms of domain architecture, ATP-cone spans 49-139 (PRVVKRDGSR…VYLSFADVQA (91 aa)).

This sequence belongs to the NrdR family. Zn(2+) serves as cofactor.

Functionally, negatively regulates transcription of bacterial ribonucleotide reductase nrd genes and operons by binding to NrdR-boxes. The chain is Transcriptional repressor NrdR from Thioalkalivibrio sulfidiphilus (strain HL-EbGR7).